The chain runs to 309 residues: Methionyl-tRNA formyltransferase (309 aa).

Residue 109–112 coordinates (6S)-5,6,7,8-tetrahydrofolate; sequence SLLP.

This sequence belongs to the Fmt family.

It catalyses the reaction L-methionyl-tRNA(fMet) + (6R)-10-formyltetrahydrofolate = N-formyl-L-methionyl-tRNA(fMet) + (6S)-5,6,7,8-tetrahydrofolate + H(+). Attaches a formyl group to the free amino group of methionyl-tRNA(fMet). The formyl group appears to play a dual role in the initiator identity of N-formylmethionyl-tRNA by promoting its recognition by IF2 and preventing the misappropriation of this tRNA by the elongation apparatus. The chain is Methionyl-tRNA formyltransferase from Thiobacillus denitrificans (strain ATCC 25259 / T1).